A 67-amino-acid chain; its full sequence is Conotoxin LiC33 (67 aa).

An N-terminal signal peptide occupies residues 1–22 (MRCVPVFIILLLLSPSAPSVDA). A propeptide spanning residues 23–48 (HPKTKDDVPLASFHDDAKRTLQRLWI) is cleaved from the precursor. F63 bears the Phenylalanine amide mark. Positions 65 to 67 (KGK) are excised as a propeptide.

This sequence belongs to the conotoxin T superfamily. In terms of processing, contains 2 disulfide bonds that can be either 'C1-C3, C2-C4' or 'C1-C4, C2-C3', since these disulfide connectivities have been observed for conotoxins with cysteine framework V (for examples, see AC P0DQQ7 and AC P81755). In terms of tissue distribution, expressed by the venom duct.

Its subcellular location is the secreted. The sequence is that of Conotoxin LiC33 from Conus lividus (Livid cone).